A 78-amino-acid chain; its full sequence is MPKKILTGVVTSDKPNKTITVSVERKYSHPVLKKVVKVRKKYNAHDENNKFKTGDTVSIIECKPFSKNKKFQVMDESK.

It belongs to the universal ribosomal protein uS17 family. Part of the 30S ribosomal subunit.

In terms of biological role, one of the primary rRNA binding proteins, it binds specifically to the 5'-end of 16S ribosomal RNA. The sequence is that of Small ribosomal subunit protein uS17 from Pelagibacter ubique (strain HTCC1062).